The chain runs to 406 residues: Luteothin monooxygenase (406 aa).

Residues H98, R102, R296, G350, H353, and C355 each coordinate heme b.

This sequence belongs to the cytochrome P450 family. In terms of assembly, monomer. Requires heme b as cofactor.

It catalyses the reaction luteothin + 4 reduced [2Fe-2S]-[ferredoxin] + 2 O2 + 4 H(+) = aureothin + 4 oxidized [2Fe-2S]-[ferredoxin] + 3 H2O. It participates in antibiotic biosynthesis. Its pathway is polyketide biosynthesis. Functionally, bifunctional cytochrome P450 protein involved in the biosynthesis of the antibiotic aureothin, a nitroaryl polyketide metabolite with antifungal, cytotoxic and insecticidal activities. Catalyzes the hydroxylation of luteothin (also called deoxyaureothin), leading to the formation of the intermediate (7R)-7-hydroxydeoxyaureothin, followed by the formation of the aureothin tetrahydrofuran ring, the final step in the biosynthesis of aureothin. The protein is Luteothin monooxygenase of Streptomyces thioluteus.